We begin with the raw amino-acid sequence, 648 residues long: Transketolase (648 aa).

His22 contributes to the substrate binding site. Thiamine diphosphate-binding positions include His62 and 109–111 (GPL). Asp150 provides a ligand contact to Mg(2+). Thiamine diphosphate contacts are provided by Gly151 and Asn180. Positions 180 and 182 each coordinate Mg(2+). Residues His252, Arg345, and Ser372 each coordinate substrate. Residue His252 participates in thiamine diphosphate binding. Glu397 serves as the catalytic Proton donor. Phe423 is a binding site for thiamine diphosphate. Substrate-binding residues include His447, Asp455, and Arg506.

Belongs to the transketolase family. Homodimer. It depends on Mg(2+) as a cofactor. The cofactor is Ca(2+). Mn(2+) serves as cofactor. Requires Co(2+) as cofactor. Thiamine diphosphate is required as a cofactor.

The catalysed reaction is D-sedoheptulose 7-phosphate + D-glyceraldehyde 3-phosphate = aldehydo-D-ribose 5-phosphate + D-xylulose 5-phosphate. Catalyzes the transfer of a two-carbon ketol group from a ketose donor to an aldose acceptor, via a covalent intermediate with the cofactor thiamine pyrophosphate. This is Transketolase (tkt) from Mycoplasma genitalium (strain ATCC 33530 / DSM 19775 / NCTC 10195 / G37) (Mycoplasmoides genitalium).